We begin with the raw amino-acid sequence, 768 residues long: Histone-lysine N-methyltransferase, H3 lysine-36 specific (768 aa).

In terms of domain architecture, AWS spans 45–90; sequence AEVMACDCKPGPTACDEDSGCINRLTSIECVRCCKGCQNKRFQGKK. The SET domain maps to 92–209; it reads ASVDVISTEK…RGEEVTFDYN (118 aa). The region spanning 216–232 is the Post-SET domain; it reads EAQACYCGEKNCVGFLG. Residues 411–452 show a composition bias toward basic and acidic residues; the sequence is KIDPDGDEHSVSRGTSEEVTKESSKSEEPNDVEVVKVNKKAD. 3 disordered regions span residues 411-508, 533-610, and 680-768; these read KIDP…KGWQ, KASR…VNAQ, and VVKR…IDLE. The span at 453 to 469 shows a compositional bias: polar residues; it reads NNGNGVTDSPSTRSESP. A WW domain is found at 501–534; that stretch reads RSLPKGWQFANDPQGKVYYYNLELNIQQWDFPKA. 3 stretches are compositionally biased toward basic and acidic residues: residues 555 to 568, 682 to 734, and 755 to 768; these read NRRD…ETRE, KRLE…KGEE, and TVKK…IDLE.

The protein belongs to the class V-like SAM-binding methyltransferase superfamily. Histone-lysine methyltransferase family. SET2 subfamily.

Its subcellular location is the nucleus. The protein localises to the chromosome. The enzyme catalyses L-lysyl(36)-[histone H3] + 3 S-adenosyl-L-methionine = N(6),N(6),N(6)-trimethyl-L-lysyl(36)-[histone H3] + 3 S-adenosyl-L-homocysteine + 3 H(+). Functionally, histone methyltransferase that trimethylates histone H3 'Lys-36' forming H3K36me3. Involved in transcription elongation as well as in transcription repression. The protein is Histone-lysine N-methyltransferase, H3 lysine-36 specific (set-2) of Yarrowia lipolytica (strain CLIB 122 / E 150) (Yeast).